We begin with the raw amino-acid sequence, 301 residues long: Haloalkane dehalogenase (301 aa).

The 238-residue stretch at 47–284 (PPIVLLHGEP…INASHFIQED (238 aa)) folds into the AB hydrolase-1 domain. Asp-123 acts as the Nucleophile in catalysis. Asp-250 acts as the Proton donor in catalysis. His-279 serves as the catalytic Proton acceptor.

This sequence belongs to the haloalkane dehalogenase family. Type 1 subfamily. In terms of assembly, monomer.

The enzyme catalyses 1-haloalkane + H2O = a halide anion + a primary alcohol + H(+). In terms of biological role, catalyzes hydrolytic cleavage of carbon-halogen bonds in halogenated aliphatic compounds, leading to the formation of the corresponding primary alcohols, halide ions and protons. This chain is Haloalkane dehalogenase, found in Mycolicibacterium paratuberculosis (strain ATCC BAA-968 / K-10) (Mycobacterium paratuberculosis).